The following is a 671-amino-acid chain: Amidase chry2 (671 aa).

Catalysis depends on C2, which acts as the Nucleophile. Residues 2–220 (CGISAFITHP…PGHYLICRPN (219 aa)) enclose the Glutamine amidotransferase type-2 domain. The Asparagine synthetase domain occupies 251–639 (VRERLLEAVR…TQDAMDGAFN (389 aa)).

It belongs to the asparagine synthetase family.

The protein operates within pigment biosynthesis. Amidase; part of the gene cluster that mediates the biosynthesis of the yellow pigment chrysogine. Pyruvic acid and anthranilic acid are likely substrates for the nonribosomal peptide synthetase chry1/NRPS14, with pyruvic acid adenylated by the first A domain and anthranilic acid by the second. If pyruvic acid and anthranilic acid are merged and released from chry1/NRPS14 by hydrolysis, a subsequent amidation would lead to 2-pyruvoylaminobenzamide. This process is probably catalyzed by the amidotransferase chry2 using glutamine as amino donor. The dehydrogenase chry5 that has a terminal berberine bridge domain for C-N cyclization could catalyze the cyclization of 2-pyruvoylaminobenzamide to yield acetyl-4(3H)-quinazolidinone. A final reduction of acetyl-4(3H)-quinazolidinone catalyzed by the oxidoreductase chry4 would result in chrysogine. The sequence is that of Amidase chry2 from Gibberella zeae (strain ATCC MYA-4620 / CBS 123657 / FGSC 9075 / NRRL 31084 / PH-1) (Wheat head blight fungus).